The chain runs to 255 residues: Antigen LPMC-61 (255 aa).

12 repeat units span residues W18–Q48, W49–L57, W58–Q65, W66–Q78, W79–Q90, W91–Q103, W104–Q140, W141–Q152, W153–Q164, W165–Q172, W173–Q192, and W193–Q210. The interval W18 to Q90 is disordered. Residues W18 to Q210 are 12 X approximate tandem repeats, Gln-rich. The segment covering Q149–Q210 has biased composition (low complexity). The disordered stretch occupies residues Q149–L224.

As to quaternary structure, may be covalently linked by disulfide bonds to other polypeptides to form the 80 kDa antigen.

Functionally, unknown. The Gln-rich tandem repeats may be important for an unknown aspect of the parasitic life cycle. May be an important immunogen. The chain is Antigen LPMC-61 from Eimeria tenella (Coccidian parasite).